A 592-amino-acid polypeptide reads, in one-letter code: Putative RING finger protein ORF9 (592 aa).

The RING-type zinc-finger motif lies at 12 to 49 (CCICLEEDIERVDTIPCQHTVCRPCYLKPMINKCPVCR). A coiled-coil region spans residues 414-441 (WELIKREELLQRRYKREEQNLKYTSNRL).

In Ostreid herpesvirus 1 (isolate France) (OsHV-1), this protein is Putative RING finger protein ORF9.